A 1067-amino-acid polypeptide reads, in one-letter code: FHIP family protein GL19323 (1067 aa).

The segment covering 1 to 11 (MSWLRSSPLRQ) has biased composition (polar residues). Disordered regions lie at residues 1–31 (MSWL…GSLR), 503–525 (LARP…QPIQ), and 832–1013 (NENS…SEPA). Ser508 and Ser835 each carry phosphoserine. The span at 842-858 (QPQTTLSQQQQQQQGQQ) shows a compositional bias: low complexity. Residues 859 to 878 (RSAYATLSAATPVQATQTSA) show a composition bias toward polar residues. A compositionally biased stretch (low complexity) spans 893-904 (SKSISSMFSRRS). Positions 918 to 949 (LVGNNNSGSGQSQPFSSTGTGTCETSLSTNPQ) are enriched in polar residues. Positions 950-979 (SGAAAARSTGTATTANGNSSNSNISIGGST) are enriched in low complexity. Residues 980–996 (QTLSGHSNTTTYSSSTL) show a composition bias toward polar residues.

It belongs to the FHIP family.

The chain is FHIP family protein GL19323 from Drosophila persimilis (Fruit fly).